The following is a 765-amino-acid chain: 1,4-alpha-glucan branching enzyme GlgB (765 aa).

The Nucleophile role is filled by aspartate 431. The active-site Proton donor is the glutamate 484.

It belongs to the glycosyl hydrolase 13 family. GlgB subfamily. In terms of assembly, monomer.

It carries out the reaction Transfers a segment of a (1-&gt;4)-alpha-D-glucan chain to a primary hydroxy group in a similar glucan chain.. It participates in glycan biosynthesis; glycogen biosynthesis. Its function is as follows. Catalyzes the formation of the alpha-1,6-glucosidic linkages in glycogen by scission of a 1,4-alpha-linked oligosaccharide from growing alpha-1,4-glucan chains and the subsequent attachment of the oligosaccharide to the alpha-1,6 position. In Synechococcus sp. (strain CC9605), this protein is 1,4-alpha-glucan branching enzyme GlgB.